The chain runs to 364 residues: Alpha-2-HS-glycoprotein (364 aa).

The segment at residues 1–15 is a signal peptide (or 17); sequence MKSFLLLFCLAQLCS. Residues 27–133 enclose the Cystatin fetuin-A-type 1 domain; it reads YKEPACDDPD…QFSVLFTKCD (107 aa). Disulfide bonds link C32–C355, C89–C100, C114–C132, C146–C149, C208–C219, and C230–C248. N-linked (GlcNAc...) asparagine glycosylation is present at N99. Phosphoserine occurs at positions 134, 135, and 138. The Cystatin fetuin-A-type 2 domain occupies 144–256; it reads KLCPDCPLLA…TCTLFQTQPV (113 aa). Residues N156 and N176 are each glycosylated (N-linked (GlcNAc...) asparagine). O-linked (GalNAc...) serine glycosylation is present at S301. T319 carries the phosphothreonine modification. A phosphoserine mark is found at S321, S325, S328, and S330. An O-linked (GalNAc...) threonine glycan is attached at T339.

It belongs to the fetuin family. Phosphorylated by FAM20C in the extracellular medium.

Its subcellular location is the secreted. This is Alpha-2-HS-glycoprotein (AHSG) from Ovis aries (Sheep).